A 116-amino-acid chain; its full sequence is Large ribosomal subunit protein uL18 (116 aa).

It belongs to the universal ribosomal protein uL18 family. As to quaternary structure, part of the 50S ribosomal subunit; part of the 5S rRNA/L5/L18/L25 subcomplex. Contacts the 5S and 23S rRNAs.

This is one of the proteins that bind and probably mediate the attachment of the 5S RNA into the large ribosomal subunit, where it forms part of the central protuberance. This chain is Large ribosomal subunit protein uL18, found in Acinetobacter baylyi (strain ATCC 33305 / BD413 / ADP1).